The following is a 158-amino-acid chain: Transcriptional repressor NrdR (158 aa).

The tract at residues 1–20 (MRCPSCGSLDTQVKDSRPTE) is disordered. Residues 3-34 (CPSCGSLDTQVKDSRPTEDSSVIRRRRVCLTC) fold into a zinc finger. The ATP-cone domain maps to 49-139 (LTVIKRNGRR…VYRNFREAKD (91 aa)).

The protein belongs to the NrdR family. The cofactor is Zn(2+).

Its function is as follows. Negatively regulates transcription of bacterial ribonucleotide reductase nrd genes and operons by binding to NrdR-boxes. The polypeptide is Transcriptional repressor NrdR (Afipia carboxidovorans (strain ATCC 49405 / DSM 1227 / KCTC 32145 / OM5) (Oligotropha carboxidovorans)).